A 373-amino-acid chain; its full sequence is NADPH-dependent 3-keto-steroid reductase HSD3B3 (373 aa).

NADP(+) contacts are provided by residues 10–15 (GAGGFL), tyrosine 155, and lysine 159. Lysine 159 serves as the catalytic Proton donor. The helical transmembrane segment at 288 to 308 (VALLYWFGFLLETVSFLLRPV) threads the bilayer.

This sequence belongs to the 3-beta-HSD family. High levels in adrenal gland, kidney and male liver (at protein level). Low levels in female liver (at protein level). Expressed in ovaries (at protein level).

The protein localises to the endoplasmic reticulum membrane. Its subcellular location is the mitochondrion membrane. It carries out the reaction a 3beta-hydroxysteroid + NADP(+) = a 3-oxosteroid + NADPH + H(+). The enzyme catalyses 5alpha-androstane-3beta,17beta-diol + NADP(+) = 17beta-hydroxy-5alpha-androstan-3-one + NADPH + H(+). It participates in steroid metabolism. Its function is as follows. Responsible for the reduction of the oxo group on the C-3 of 5alpha-androstane steroids. Catalyzes the conversion of dihydrotestosterone to its inactive form 5alpha-androstanediol, that does not bind androgen receptor/AR. Does not function as an isomerase. The protein is NADPH-dependent 3-keto-steroid reductase HSD3B3 (HSD3B3) of Mesocricetus auratus (Golden hamster).